Reading from the N-terminus, the 417-residue chain is Ig-like V-type domain-containing protein FAM187A (417 aa).

The N-terminal stretch at 1–18 (MSLAHTTVLLWAWGSLQA) is a signal peptide. At 19–377 (FEIVEKESVF…ASLSDPETRT (359 aa)) the chain is on the extracellular side. 2 N-linked (GlcNAc...) asparagine glycosylation sites follow: Asn-248 and Asn-318. The Ig-like V-type domain occupies 268–362 (PWVPQVPIQF…IAGFRLGVIT (95 aa)). Cys-290 and Cys-346 are joined by a disulfide. Residues 378-398 (AIELTLMGYLLITIFFITIHL) traverse the membrane as a helical segment. At 399-417 (CRCCCQSRCCPNFSAQTLL) the chain is on the cytoplasmic side.

It belongs to the FAM187 family.

It is found in the membrane. The chain is Ig-like V-type domain-containing protein FAM187A (Fam187a) from Mus musculus (Mouse).